The sequence spans 130 residues: Small ribosomal subunit protein uS8 (130 aa).

Belongs to the universal ribosomal protein uS8 family. As to quaternary structure, part of the 30S ribosomal subunit.

Functionally, one of the primary rRNA binding proteins, it binds directly to 16S rRNA central domain where it helps coordinate assembly of the platform of the 30S subunit. The protein is Small ribosomal subunit protein uS8 of Methanosphaera stadtmanae (strain ATCC 43021 / DSM 3091 / JCM 11832 / MCB-3).